The following is a 227-amino-acid chain: 2-C-methyl-D-erythritol 4-phosphate cytidylyltransferase (227 aa).

It belongs to the IspD/TarI cytidylyltransferase family. IspD subfamily.

The catalysed reaction is 2-C-methyl-D-erythritol 4-phosphate + CTP + H(+) = 4-CDP-2-C-methyl-D-erythritol + diphosphate. It functions in the pathway isoprenoid biosynthesis; isopentenyl diphosphate biosynthesis via DXP pathway; isopentenyl diphosphate from 1-deoxy-D-xylulose 5-phosphate: step 2/6. In terms of biological role, catalyzes the formation of 4-diphosphocytidyl-2-C-methyl-D-erythritol from CTP and 2-C-methyl-D-erythritol 4-phosphate (MEP). The protein is 2-C-methyl-D-erythritol 4-phosphate cytidylyltransferase of Nostoc punctiforme (strain ATCC 29133 / PCC 73102).